The primary structure comprises 244 residues: MRIIVVDNYEEMSKKAAAMMASQVILKPDSVLGLATGDTPIGMYREIINIYKNQKMDFSKVKTFNLDEYYGLNRGNPQSYYYYMMNNLFNYVNIDKNNINIPNGMADNIEVECKEYERKIDKAGGIDLQILGIGVNGHIGFNEPNISFESETHLVNLNEKTIESNSRFFSSKEEVPTKAISMGIKSIIHSKKIILLACGSAKSDAVSKAINGKITPNIPASILQLHRDVVVIIDKEAASKLNLK.

Residue Asp67 is the Proton acceptor; for enolization step of the active site. Asn136 serves as the catalytic For ring-opening step. His138 acts as the Proton acceptor; for ring-opening step in catalysis. Glu143 (for ring-opening step) is an active-site residue.

This sequence belongs to the glucosamine/galactosamine-6-phosphate isomerase family. NagB subfamily.

It carries out the reaction alpha-D-glucosamine 6-phosphate + H2O = beta-D-fructose 6-phosphate + NH4(+). Its pathway is amino-sugar metabolism; N-acetylneuraminate degradation; D-fructose 6-phosphate from N-acetylneuraminate: step 5/5. Its function is as follows. Catalyzes the reversible isomerization-deamination of glucosamine 6-phosphate (GlcN6P) to form fructose 6-phosphate (Fru6P) and ammonium ion. The sequence is that of Glucosamine-6-phosphate deaminase from Clostridium botulinum (strain 657 / Type Ba4).